A 526-amino-acid polypeptide reads, in one-letter code: Threonine synthase 1, chloroplastic (526 aa).

The transit peptide at 1 to 40 (MASSCLFNASVSSLNPKQDPIRRHRSTSLLRHRPVVISCT) directs the protein to the chloroplast. S-adenosyl-L-methionine contacts are provided by residues 142-144 (PYG), 165-167 (SAF), Asn-172, Leu-173, Lys-181, and Asn-187. Lys-203 carries the N6-(pyridoxal phosphate)lysine modification. Pyridoxal 5'-phosphate is bound by residues 335-339 (GNLGN) and Thr-472.

The protein belongs to the threonine synthase family. In terms of assembly, homodimer. The cofactor is pyridoxal 5'-phosphate.

Its subcellular location is the plastid. The protein localises to the chloroplast. It carries out the reaction O-phospho-L-homoserine + H2O = L-threonine + phosphate. It participates in amino-acid biosynthesis; L-threonine biosynthesis; L-threonine from L-aspartate: step 5/5. With respect to regulation, allosterically activated by S-adenosyl-L-methionine (SAM). Activated by S-adenosyl-L-ethionine, 5'-amino-5'-deoxyadenosine, sinefungin and 5'-deoxy-5-methylthioadenosine. Inhibited by AMP. In terms of biological role, catalyzes the gamma-elimination of phosphate from L-phosphohomoserine and the beta-addition of water to produce L-threonine. The polypeptide is Threonine synthase 1, chloroplastic (TS1) (Arabidopsis thaliana (Mouse-ear cress)).